The sequence spans 210 residues: Somatotropin-2 (210 aa).

Residues 1-22 (MGQVFLLMPVLLVSCFLGQGAA) form the signal peptide. Residue His38 coordinates Zn(2+). Cys71 and Cys183 form a disulfide bridge. Residue Glu192 participates in Zn(2+) binding. Cys200 and Cys208 are disulfide-bonded.

This sequence belongs to the somatotropin/prolactin family.

It localises to the secreted. Growth hormone plays an important role in growth control and is involved in the regulation of several anabolic processes. Implicated as an osmoregulatory substance important for seawater adaptation. The sequence is that of Somatotropin-2 (gh2) from Oncorhynchus mykiss (Rainbow trout).